The primary structure comprises 95 residues: Ascorbate-specific PTS system EIIB component (95 aa).

A PTS EIIB type-2 domain is found at 1 to 95 (MENKNLHIIA…EIKQALSKVL (95 aa)). Residue Cys-12 is the Phosphocysteine intermediate of the active site. Residue Cys-12 is modified to Phosphocysteine.

It localises to the cytoplasm. The enzyme catalyses N(pros)-phospho-L-histidyl-[protein] + L-ascorbate(out) = L-ascorbate 6-phosphate(in) + L-histidyl-[protein]. Its function is as follows. The phosphoenolpyruvate-dependent sugar phosphotransferase system (sugar PTS), a major carbohydrate active transport system, catalyzes the phosphorylation of incoming sugar substrates concomitantly with their translocation across the cell membrane. The enzyme II UlaABC PTS system is involved in ascorbate transport. This chain is Ascorbate-specific PTS system EIIB component (ulaB), found in Mycoplasma pneumoniae (strain ATCC 29342 / M129 / Subtype 1) (Mycoplasmoides pneumoniae).